A 358-amino-acid polypeptide reads, in one-letter code: Methylthioribose-1-phosphate isomerase (358 aa).

Substrate-binding positions include 54–56, Arg-96, and Gln-205; that span reads RGA. The Proton donor role is filled by Asp-246. 256 to 257 contacts substrate; sequence NK.

The protein belongs to the eIF-2B alpha/beta/delta subunits family. MtnA subfamily.

The catalysed reaction is 5-(methylsulfanyl)-alpha-D-ribose 1-phosphate = 5-(methylsulfanyl)-D-ribulose 1-phosphate. It participates in amino-acid biosynthesis; L-methionine biosynthesis via salvage pathway; L-methionine from S-methyl-5-thio-alpha-D-ribose 1-phosphate: step 1/6. Functionally, catalyzes the interconversion of methylthioribose-1-phosphate (MTR-1-P) into methylthioribulose-1-phosphate (MTRu-1-P). This Stutzerimonas stutzeri (strain A1501) (Pseudomonas stutzeri) protein is Methylthioribose-1-phosphate isomerase.